The primary structure comprises 245 residues: NAD-dependent protein deacetylase (245 aa).

Positions 1 to 245 (MIFVQQFEEV…EFVEGLSSRK (245 aa)) constitute a Deacetylase sirtuin-type domain. Residues Ala26, Thr30, Phe37, Arg38, Gln105, Ile107, Asp108, and His123 each coordinate NAD(+). Residue Phe37 coordinates nicotinamide. Ile107 and Asp108 together coordinate nicotinamide. Residue His123 is the Proton acceptor of the active site. Residues Cys131, Cys134, Cys151, and Cys154 each coordinate Zn(2+). NAD(+) is bound by residues Thr190, Ser191, Asn216, and Ile234.

The protein belongs to the sirtuin family. Class U subfamily. Requires Zn(2+) as cofactor.

The protein resides in the cytoplasm. It carries out the reaction N(6)-acetyl-L-lysyl-[protein] + NAD(+) + H2O = 2''-O-acetyl-ADP-D-ribose + nicotinamide + L-lysyl-[protein]. NAD-dependent protein deacetylase which modulates the activities of several enzymes which are inactive in their acetylated form. The chain is NAD-dependent protein deacetylase from Bacillus cereus (strain ZK / E33L).